We begin with the raw amino-acid sequence, 523 residues long: MPSVAGEEPKASSRLLLVSNRLPITIKRTEDGQYDFTGSSGGLVTGLSGLAKTTTFQWYGWPGLEVPDAEAKPLVKRLKDEHGAHPVFVDDELADKHYNGFSNSILWPLFHYHPGEITFDESQWMAYKEVNRLFAKTIAKDVQDGDLIWVHDYHLMLLPEMLRDEIGTSKKNVKIGFFLHTPFPSSEIYRILPVRESLLLSVLHCDLIGFHTYDYARHFLSSCSRILETQTTPNGVEFRGKYVTVAAFPIGIDPEKFIETLKKPKVEERIAQLERKFEGVKLIVGVDRLDYIKGVPQKLHALEVFLTEHPEWIGKVVLVQVAVPSRQDVEEYQNLRAVVNELVGRINGRFGTVEFMPIHFLHQSVNFDELTALYAVSDACLVSSTRDGMNLVSYEYIATQRKRHGVMILSEFTGAAQSLNGALIVNPWNTEELADAIHDAVTMSPEQREINFKKLEKYVFKYTSSWWGESFVSELQRISEHAAKKSNSKGTVDKMPDLVEGVQQFNLGEQREEGRLEPGEFDD.

Residues Tyr-98 and Asp-152 each contribute to the D-glucose 6-phosphate site. Residues Arg-288 and Lys-293 each coordinate UDP. Residues Arg-288 and Lys-293 each coordinate UDP-alpha-D-glucose. Arg-326 is a binding site for D-glucose 6-phosphate. Asp-387–Glu-395 is a UDP-alpha-D-glucose binding site. Leu-391–Glu-395 contacts UDP. The disordered stretch occupies residues Gln-503 to Asp-523. Residues Glu-509–Asp-523 show a composition bias toward basic and acidic residues.

It belongs to the glycosyltransferase 20 family.

It carries out the reaction D-glucose 6-phosphate + UDP-alpha-D-glucose = alpha,alpha-trehalose 6-phosphate + UDP + H(+). It functions in the pathway carbohydrate biosynthesis. Synthase catalytic subunit of the trehalose synthase complex that catalyzes the production of trehalose from glucose-6-phosphate and UDP-alpha-D-glucose in a two step process. The disaccharide trehalose serves as a storage carbohydrate that is mobilized during conidial germination. Trehalose also serves as a protectant for cell integrity during stress. This Botryotinia fuckeliana (strain B05.10) (Noble rot fungus) protein is Alpha,alpha-trehalose-phosphate synthase [UDP-forming].